The primary structure comprises 965 residues: Valine--tRNA ligase (965 aa).

The interval 1–22 (MENTPSHINKTEPSLDKTYSPQ) is disordered. Positions 56–66 (PNVTGSLHMGH) match the 'HIGH' region motif. The 'KMSKS' region motif lies at 568 to 572 (KMSKS). Lys571 is a binding site for ATP. Positions 896 to 965 (LIDKATELDR…IEQQATIAAL (70 aa)) form a coiled coil.

This sequence belongs to the class-I aminoacyl-tRNA synthetase family. ValS type 1 subfamily. In terms of assembly, monomer.

It localises to the cytoplasm. The enzyme catalyses tRNA(Val) + L-valine + ATP = L-valyl-tRNA(Val) + AMP + diphosphate. Its function is as follows. Catalyzes the attachment of valine to tRNA(Val). As ValRS can inadvertently accommodate and process structurally similar amino acids such as threonine, to avoid such errors, it has a 'posttransfer' editing activity that hydrolyzes mischarged Thr-tRNA(Val) in a tRNA-dependent manner. The protein is Valine--tRNA ligase of Yersinia pestis.